A 370-amino-acid chain; its full sequence is DNA primase large subunit PriL (370 aa).

Residues Cys268, Cys341, Cys350, and Cys354 each coordinate [4Fe-4S] cluster.

This sequence belongs to the eukaryotic-type primase large subunit family. In terms of assembly, heterodimer of a small subunit (PriS) and a large subunit (PriL). [4Fe-4S] cluster serves as cofactor.

In terms of biological role, regulatory subunit of DNA primase, an RNA polymerase that catalyzes the synthesis of short RNA molecules used as primers for DNA polymerase during DNA replication. Stabilizes and modulates the activity of the small subunit, increasing the rate of DNA synthesis, and conferring RNA synthesis capability. The DNA polymerase activity may enable DNA primase to also catalyze primer extension after primer synthesis. May also play a role in DNA repair. This is DNA primase large subunit PriL from Archaeoglobus fulgidus (strain ATCC 49558 / DSM 4304 / JCM 9628 / NBRC 100126 / VC-16).